The sequence spans 532 residues: GH3 domain-containing protein (532 aa).

The signal sequence occupies residues 1 to 18 (MLLLWLLLLLLLLVPLLA). The segment at 100–123 (LTQTSHTQEQESEETLPSPASPQY) is disordered. Asn356 and Asn451 each carry an N-linked (GlcNAc...) asparagine glycan.

This sequence belongs to the GH3 family. As to expression, highly expressed in mammary tissues from mature virgins and at day 13 of pregnancy, and at lower level during lactation. Expressed at intermediate level in liver. Expressed at lower level in kidney, heart and brain.

It localises to the endoplasmic reticulum. It is found in the nucleus envelope. This Mus musculus (Mouse) protein is GH3 domain-containing protein (Ghdc).